The following is a 400-amino-acid chain: Phosphoglycerate kinase (400 aa).

Substrate is bound by residues D21–N23, R37, H60–R63, R121, and R154. Residues K204, E326, and G355–S358 each bind ATP.

The protein belongs to the phosphoglycerate kinase family. In terms of assembly, monomer.

The protein localises to the cytoplasm. The catalysed reaction is (2R)-3-phosphoglycerate + ATP = (2R)-3-phospho-glyceroyl phosphate + ADP. It participates in carbohydrate degradation; glycolysis; pyruvate from D-glyceraldehyde 3-phosphate: step 2/5. The sequence is that of Phosphoglycerate kinase from Chloroflexus aggregans (strain MD-66 / DSM 9485).